The sequence spans 900 residues: Protein translocase subunit SecA (900 aa).

ATP-binding positions include Gln87, 105–109, and Asp512; that span reads GEGKT. Residues 849–900 form a disordered region; it reads ERLAQQQQFSHQEEDSLNTGSPAQADRKIGRNDPCPCGSGKKYKQCHGRLQK. Cys883, Cys885, Cys894, and His895 together coordinate Zn(2+). The segment covering 889 to 900 has biased composition (basic residues); that stretch reads KKYKQCHGRLQK.

It belongs to the SecA family. Monomer and homodimer. Part of the essential Sec protein translocation apparatus which comprises SecA, SecYEG and auxiliary proteins SecDF-YajC and YidC. It depends on Zn(2+) as a cofactor.

It localises to the cell inner membrane. It is found in the cytoplasm. It carries out the reaction ATP + H2O + cellular proteinSide 1 = ADP + phosphate + cellular proteinSide 2.. Part of the Sec protein translocase complex. Interacts with the SecYEG preprotein conducting channel. Has a central role in coupling the hydrolysis of ATP to the transfer of proteins into and across the cell membrane, serving both as a receptor for the preprotein-SecB complex and as an ATP-driven molecular motor driving the stepwise translocation of polypeptide chains across the membrane. The polypeptide is Protein translocase subunit SecA (Pectobacterium atrosepticum (strain SCRI 1043 / ATCC BAA-672) (Erwinia carotovora subsp. atroseptica)).